Reading from the N-terminus, the 130-residue chain is Small ribosomal subunit protein uS8 (130 aa).

This sequence belongs to the universal ribosomal protein uS8 family. Part of the 30S ribosomal subunit. Contacts proteins S5 and S12.

One of the primary rRNA binding proteins, it binds directly to 16S rRNA central domain where it helps coordinate assembly of the platform of the 30S subunit. The polypeptide is Small ribosomal subunit protein uS8 (Cytophaga hutchinsonii (strain ATCC 33406 / DSM 1761 / CIP 103989 / NBRC 15051 / NCIMB 9469 / D465)).